Consider the following 181-residue polypeptide: Protein Syd (181 aa).

Belongs to the Syd family.

It is found in the cell inner membrane. Interacts with the SecY protein in vivo. May bind preferentially to an uncomplexed state of SecY, thus functioning either as a chelating agent for excess SecY in the cell or as a regulatory factor that negatively controls the translocase function. In Klebsiella pneumoniae subsp. pneumoniae (strain ATCC 700721 / MGH 78578), this protein is Protein Syd.